The sequence spans 440 residues: Doublesex- and mab-3-related transcription factor A2 (440 aa).

Residues 59 to 106 (CARCRNHGVVSALKGHKRYCRWKDCMCAKCTLIAERQRVMAAQVALRR) constitute a DNA-binding region (DM). Residues 167–261 (PKTPLPGTVT…SPSSAASRQM (95 aa)) are disordered. Basic and acidic residues predominate over residues 199 to 213 (DMRHGSGSENGDRES). Over residues 229 to 241 (TPGSISPIGSDSG) the composition is skewed to low complexity. The span at 251 to 261 (PSPSSAASRQM) shows a compositional bias: polar residues. The region spanning 261–296 (MNAIDILTRVFPNHKRSVLELVLQGCGKNVVQAIEQ) is the DMA domain.

It belongs to the DMRT family. In terms of tissue distribution, restrictively expressed in brain and developing germ cells, especially in spermatogonia, spermatocytes, spermatids, and sperm cells, and in developing oocytes, including early perinucleolus stage oocyte, late yolk vesicle stage oocyte, and oil drop stage oocyte.

The protein localises to the nucleus. Functionally, may be involved in sexual development. The protein is Doublesex- and mab-3-related transcription factor A2 (dmrta2) of Danio rerio (Zebrafish).